The chain runs to 826 residues: Glycerol-3-phosphate acyltransferase 1, mitochondrial (826 aa).

At 1–87 the chain is on the cytoplasmic side; sequence MDESALTLGT…FFNPSIPSLG (87 aa). The interval 80–120 is important for mitochondrial localization; sequence NPSIPSLGLRNVIYINETHTRHRGWLARRLSYVLFIQERDV. An intramembrane segment occupies 88–118; that stretch reads LRNVIYINETHTRHRGWLARRLSYVLFIQER. Residues 119-826 are Cytoplasmic-facing; it reads DVHKGMFATN…LEYILSFVVL (708 aa). The HXXXXD motif motif lies at 230 to 235; it reads HRSHID. Residues Arg278, Arg279, Lys288, Arg293, and Arg328 each contribute to the CoA site. Ser380 bears the Phosphoserine mark. A CoA-binding site is contributed by Arg462. 2 positions are modified to phosphoserine: Ser686 and Ser693. 2 positions are modified to N6-acetyllysine: Lys778 and Lys782.

This sequence belongs to the GPAT/DAPAT family.

It is found in the mitochondrion outer membrane. It catalyses the reaction sn-glycerol 3-phosphate + an acyl-CoA = a 1-acyl-sn-glycero-3-phosphate + CoA. The enzyme catalyses (9Z,12Z)-octadecadienoyl-CoA + sn-glycerol 3-phosphate = 1-(9Z,12Z)-octadecadienoyl-sn-glycero-3-phosphate + CoA. The catalysed reaction is sn-glycerol 3-phosphate + (9Z)-octadecenoyl-CoA = 1-(9Z-octadecenoyl)-sn-glycero-3-phosphate + CoA. It carries out the reaction sn-glycerol 3-phosphate + octadecanoyl-CoA = 1-octadecanoyl-sn-glycero-3-phosphate + CoA. It catalyses the reaction sn-glycerol 3-phosphate + hexadecanoyl-CoA = 1-hexadecanoyl-sn-glycero-3-phosphate + CoA. The enzyme catalyses dodecanoyl-CoA + sn-glycerol 3-phosphate = 1-dodecanoyl-sn-glycerol 3-phosphate + CoA. The catalysed reaction is 1-acyl-sn-glycero-3-phospho-(1'-sn-glycerol) + an acyl-CoA = a 1,2-diacyl-sn-glycero-3-phospho-(1'-sn-glycerol) + CoA. It functions in the pathway phospholipid metabolism; CDP-diacylglycerol biosynthesis; CDP-diacylglycerol from sn-glycerol 3-phosphate: step 1/3. Functionally, mitochondrial membrane protein that catalyzes the essential first step of biosynthesis of glycerolipids such as triglycerides, phosphatidic acids and lysophosphatidic acids. Esterifies acyl-group from acyl-coenzyme A (acyl-CoA) to the sn-1 position of glycerol-3-phosphate, to produce lysophosphatidic acid. Has a narrow hydrophobic binding cleft that selects for a linear acyl chain. Catalytic activity is higher for substrates with a 16-carbon acyl chain. The sequence is that of Glycerol-3-phosphate acyltransferase 1, mitochondrial from Sus scrofa (Pig).